Consider the following 228-residue polypeptide: Ephrin-A5 (228 aa).

The N-terminal stretch at 1–20 (MPHVEMLLLAVAALWVCVRG) is a signal peptide. Residues 29–162 (ADRYAVYWNS…KLKVFVRPAN (134 aa)) enclose the Ephrin RBD domain. A glycan (N-linked (GlcNAc...) asparagine) is linked at Asn-37. 2 disulfide bridges follow: Cys-62/Cys-102 and Cys-90/Cys-151. Asn-203 carries the GPI-anchor amidated asparagine lipid modification. The propeptide at 204-228 (AAQTPRIPIRLLATLLFLLAMLLIL) is removed in mature form.

Belongs to the ephrin family. Expressed in a graded fashion across the tectum being more strongly expressed towards the posterior pole.

The protein localises to the cell membrane. Cell surface GPI-bound ligand for Eph receptors, a family of receptor tyrosine kinases which are crucial for migration, repulsion and adhesion during neuronal, vascular and epithelial development. Binds promiscuously Eph receptors residing on adjacent cells, leading to contact-dependent bidirectional signaling into neighboring cells. Induces compartmentalized signaling within a caveolae-like membrane microdomain when bound to the extracellular domain of its cognate receptor. This signaling event requires the activity of the Fyn tyrosine kinase. Activates the EPHA3 receptor to regulate cell-cell adhesion and cytoskeletal organization. With the receptor EPHA2 may regulate lens fiber cells shape and interactions and be important for lens transparency maintenance. May function actively to stimulate axon fasciculation. Induces growth cone collapse and repulsion of retinal ganglion cell axons. This chain is Ephrin-A5 (EFNA5), found in Gallus gallus (Chicken).